A 215-amino-acid polypeptide reads, in one-letter code: 3-isopropylmalate dehydratase small subunit (215 aa).

The protein belongs to the LeuD family. LeuD type 1 subfamily. As to quaternary structure, heterodimer of LeuC and LeuD.

It catalyses the reaction (2R,3S)-3-isopropylmalate = (2S)-2-isopropylmalate. It participates in amino-acid biosynthesis; L-leucine biosynthesis; L-leucine from 3-methyl-2-oxobutanoate: step 2/4. In terms of biological role, catalyzes the isomerization between 2-isopropylmalate and 3-isopropylmalate, via the formation of 2-isopropylmaleate. This is 3-isopropylmalate dehydratase small subunit from Marinobacter nauticus (strain ATCC 700491 / DSM 11845 / VT8) (Marinobacter aquaeolei).